The primary structure comprises 131 residues: Small nuclear ribonucleoprotein SmD3b (131 aa).

The Sm domain occupies 7-79; that stretch reads IPVKLLHEAS…VRFMVIPDIL (73 aa). The segment at 96–131 is disordered; sequence SSSLGVGRGRGAMRGKPAAGPGRGTGGRGAVPPVRR.

Belongs to the snRNP core protein family. Expressed in young seedlings, roots, leaves, flowers and immature siliques.

It is found in the cytoplasm. Its subcellular location is the cytosol. The protein localises to the nucleus. Functionally, core component of the spliceosomal U1, U2, U4 and U5 small nuclear ribonucleoproteins (snRNPs), the building blocks of the spliceosome. May play a major role in the splicing of cellular pre-mRNAs. Required for normal plant development. This Arabidopsis thaliana (Mouse-ear cress) protein is Small nuclear ribonucleoprotein SmD3b.